The primary structure comprises 567 residues: TNF receptor-associated factor 3 (567 aa).

A disordered region spans residues 1-26 (MESSKKMDAAGTLQPNPPLKLQPDRG). Cys55 participates in a covalent cross-link: Glycyl cysteine thioester (Cys-Gly) (interchain with G-Cter in ubiquitin). Residues 67–76 (CGHRFCESCM) form an RING-type zinc finger. Lys106 participates in a covalent cross-link: Glycyl lysine isopeptide (Lys-Gly) (interchain with G-Cter in ubiquitin). Residue Cys123 forms a Glycyl cysteine thioester (Cys-Gly) (interchain with G-Cter in ubiquitin) linkage. TRAF-type zinc fingers lie at residues 134 to 189 (VHLK…IKLQ) and 190 to 248 (KHED…QQIK). Glycyl lysine isopeptide (Lys-Gly) (interchain with G-Cter in ubiquitin) cross-links involve residues Lys155 and Lys167. Residues 266–337 (SNSLEKKVSL…KLKELDKEIR (72 aa)) are a coiled coil. Residue Lys328 forms a Glycyl lysine isopeptide (Lys-Gly) (interchain with G-Cter in ubiquitin) linkage. The MATH domain occupies 414 to 559 (NGVLIWKIRD…DDTIFIKVIV (146 aa)).

It belongs to the TNF receptor-associated factor family. A subfamily. In terms of assembly, homotrimer. Heterotrimer with TRAF2 and TRAF5. Interacts with LTBR/TNFRSF3, TNFRSF4, TNFRSF5/CD40, TNFRSF8/CD30, TNFRSF13C TNFRSF17/BCMA, TLR4 and EDAR. Interacts with MAP3K5, MAP3K14, TRAIP/TRIP, TDP2/TTRAP, TANK/ITRAF and TRAF3IP1. Interaction with TNFRSF5/CD40 is modulated by TANK/ITRAF, which competes for the same binding site. Interacts with TICAM1. Interacts with TRAFD1. Interacts with OTUB1, OTUB2 and OTUD5. Interacts with RNF216, OPTN and TBK1. Identified in a complex with TRAF2, MAP3K14 and BIRC3. Upon exposure to bacterial lipopolysaccharide (LPS), recruited to a transient complex containing TLR4, TRAF3, TRAF6, IKBKG, MAP3K7, MYD88, TICAM1, BIRC2, BIRC3 and UBE2N. Interacts (via RING-type zinc finger domain) with SRC. Interacts with CARD14. Interacts (via MATH domain) with PTPN22; the interaction promotes TRAF3 polyubiquitination. Interacts with MAVS. Directly interacts with DDX3X; this interaction stimulates TRAF3 'Lys-63' ubiquitination. Interacts with IRF3. Interacts with IKBKE in the course of viral infection. Interacts with TRIM35. Interacts with GAPDH; promoting TRAF3 ubiquitination. Interacts with PPP3CA and PPP3CB. Interacts with RALGDS. Interacts with FBXO11. Undergoes 'Lys-48'-linked polyubiquitination, leading to its proteasomal degradation in response to signaling by TNFSF13B, TLR4 or through CD40. 'Lys-48'-linked polyubiquitinated form is deubiquitinated by OTUD7B, preventing TRAF3 proteolysis and over-activation of non-canonical NF-kappa-B. Undergoes 'Lys-63'-linked ubiquitination during early stages of virus infection, and 'Lys-48'-linked ubiquitination during later stages. Undergoes both 'Lys-48'-linked and 'Lys-63'-linked ubiquitination in response to TLR3 and TLR4 signaling. 'Lys-63'-linked ubiquitination can be mediated by TRIM35. Deubiquitinated by OTUB1, OTUB2 and OTUD5. Undergoes 'Lys-63'-linked deubiquitination by MYSM1 to terminate the pattern-recognition receptors/PRRs pathways. Ubiquitinated at Lys-328 by the SCF(FBXL2) complex, leading to its degradation by the proteasome. Post-translationally, undergoes 'Lys-48'-linked polyubiquitination, leading to its proteasomal degradation in response to signaling by TNFSF13B, TLR4 or through CD40. 'Lys-48'-linked polyubiquitinated form is deubiquitinated by OTUD7B, preventing TRAF3 proteolysis and over-activation of non-canonical NF-kappa-B. Undergoes 'Lys-63'-linked ubiquitination during early stages of virus infection, and 'Lys-48'-linked ubiquitination during later stages. Undergoes both 'Lys-48'-linked and 'Lys-63'-linked ubiquitination in response to TLR3 and TLR4 signaling. 'Lys-63'-linked ubiquitination can be mediated by TRIM35. Deubiquitinated by OTUB1, OTUB2 and OTUD5. Undergoes 'Lys-63'-linked deubiquitination by MYSM1 to terminate the pattern-recognition receptors/PRRs pathways. Also undergoes 'Lys-29'-linked ubiquitination on Cys-55 and Cys-123 by NEDD4L; leading to increased 'Lys-48'- and 'Lys-63'-linked ubiquitination as well as increased binding to TBK1. TLR4 signals emanating from bacteria containing vesicles trigger 'Lys-33'-linked polyubiquitination that promotes the assembly of the exocyst complex thereby connecting innate immune signaling to the cellular trafficking apparatus. Deubiquitinated by USP25 during viral infection, leading to TRAF3 stabilization and type I interferon production. 'Lys-63'-linked ubiquitination by FBXO11 in a NEDD8-dependent manner promotes the amplification of IFN-I signaling. As to expression, detected in bone marrow macrophages and spleen B-cells (at protein level). In adult, highest in brain. Also found in kidney, heart, thymus, spleen, lung, muscle, testis and ovary. Not found in liver.

It is found in the cytoplasm. The protein resides in the endosome. It localises to the mitochondrion. It carries out the reaction S-ubiquitinyl-[E2 ubiquitin-conjugating enzyme]-L-cysteine + [acceptor protein]-L-lysine = [E2 ubiquitin-conjugating enzyme]-L-cysteine + N(6)-ubiquitinyl-[acceptor protein]-L-lysine.. Its function is as follows. Cytoplasmic E3 ubiquitin ligase that regulates various signaling pathways, such as the NF-kappa-B, mitogen-activated protein kinase (MAPK) and interferon regulatory factor (IRF) pathways, and thus controls a lot of biological processes in both immune and non-immune cell types. In TLR and RLR signaling pathways, acts as an E3 ubiquitin ligase promoting the synthesis of 'Lys-63'-linked polyubiquitin chains on several substrates such as ASC that lead to the activation of the type I interferon response or the inflammasome. Following the activation of certain TLRs such as TLR4, acts as a negative NF-kappa-B regulator, possibly to avoid unregulated inflammatory response, and its degradation via 'Lys-48'-linked polyubiquitination is required for MAPK activation and production of inflammatory cytokines. Alternatively, when TLR4 orchestrates bacterial expulsion, TRAF3 undergoes 'Lys-33'-linked polyubiquitination and subsequently binds to RALGDS, mobilizing the exocyst complex to rapidly expel intracellular bacteria back for clearance. Also acts as a constitutive negative regulator of the alternative NF-kappa-B pathway, which controls B-cell survival and lymphoid organ development. Required for normal antibody isotype switching from IgM to IgG. Plays a role T-cell dependent immune responses. Down-regulates proteolytic processing of NFKB2, and thereby inhibits non-canonical activation of NF-kappa-B. Promotes ubiquitination and proteasomal degradation of MAP3K14. The polypeptide is TNF receptor-associated factor 3 (Mus musculus (Mouse)).